Consider the following 287-residue polypeptide: Elongation factor Ts (287 aa).

The tract at residues 77 to 80 (TDFV) is involved in Mg(2+) ion dislocation from EF-Tu.

The protein belongs to the EF-Ts family.

It localises to the cytoplasm. Functionally, associates with the EF-Tu.GDP complex and induces the exchange of GDP to GTP. It remains bound to the aminoacyl-tRNA.EF-Tu.GTP complex up to the GTP hydrolysis stage on the ribosome. In Wolbachia sp. subsp. Brugia malayi (strain TRS), this protein is Elongation factor Ts.